A 272-amino-acid polypeptide reads, in one-letter code: Putative hydro-lyase AZC_4080 (272 aa).

This sequence belongs to the D-glutamate cyclase family.

In Azorhizobium caulinodans (strain ATCC 43989 / DSM 5975 / JCM 20966 / LMG 6465 / NBRC 14845 / NCIMB 13405 / ORS 571), this protein is Putative hydro-lyase AZC_4080.